Reading from the N-terminus, the 144-residue chain is Large ribosomal subunit protein uL16 (144 aa).

Basic residues predominate over residues 1–19 (MLLPKRVKYRRQHRPKTTG). Residues 1–26 (MLLPKRVKYRRQHRPKTTGRSKGGNE) form a disordered region.

This sequence belongs to the universal ribosomal protein uL16 family. Part of the 50S ribosomal subunit.

Functionally, binds 23S rRNA and is also seen to make contacts with the A and possibly P site tRNAs. In Macrococcus caseolyticus (strain JCSC5402) (Macrococcoides caseolyticum), this protein is Large ribosomal subunit protein uL16.